Here is a 1010-residue protein sequence, read N- to C-terminus: Protein translocase subunit SecA (1010 aa).

Residues glutamine 86, 104 to 108, and aspartate 535 each bind ATP; that span reads GEGKT. Low complexity predominate over residues 893 to 904; it reads QAGAADGNAKGA. The disordered stretch occupies residues 893 to 916; that stretch reads QAGAADGNAKGARTVRHSVRLPGR. Residues cysteine 920, cysteine 922, cysteine 931, and histidine 932 each contribute to the Zn(2+) site. Positions 950-981 are enriched in low complexity; that stretch reads QHAAVAADTPAQPAPQATATRPPTSQVPRGRA. The tract at residues 950 to 1010 is disordered; that stretch reads QHAAVAADTP…RGKGASARKK (61 aa).

Belongs to the SecA family. As to quaternary structure, monomer and homodimer. Part of the essential Sec protein translocation apparatus which comprises SecA, SecYEG and auxiliary proteins SecDF. Other proteins may also be involved. Requires Zn(2+) as cofactor.

The protein localises to the cell membrane. Its subcellular location is the cytoplasm. The catalysed reaction is ATP + H2O + cellular proteinSide 1 = ADP + phosphate + cellular proteinSide 2.. Functionally, part of the Sec protein translocase complex. Interacts with the SecYEG preprotein conducting channel. Has a central role in coupling the hydrolysis of ATP to the transfer of proteins into and across the cell membrane, serving as an ATP-driven molecular motor driving the stepwise translocation of polypeptide chains across the membrane. The sequence is that of Protein translocase subunit SecA from Roseiflexus sp. (strain RS-1).